Here is a 1326-residue protein sequence, read N- to C-terminus: F-box/WD repeat-containing protein 7 (1326 aa).

6 disordered regions span residues 1–58 (MERG…AEVG), 123–187 (DSSS…IEDE), 318–351 (TVSNPSPAASANAAAPEEASTSNSSSTSSSALSR), 399–549 (GSKA…SGCS), 615–642 (RSNPPAASGAGSVGANPTASVRQRRNGS), and 797–843 (TPRS…NPPP). A compositionally biased stretch (polar residues) spans 9–39 (SSESVTSAGERTQSAVTSSTSTWVKSQASTS). Over residues 165–187 (NDDDDDEEPEPEEDDEEELIEDE) the composition is skewed to acidic residues. A compositionally biased stretch (low complexity) spans 320 to 348 (SNPSPAASANAAAPEEASTSNSSSTSSSA). Residues 403-464 (ANGSGTANSD…KLNLGSSLGA (62 aa)) show a composition bias toward polar residues. The span at 465–486 (SSCSQHRSGSSSTSKSMESSTS) shows a compositional bias: low complexity. A compositionally biased stretch (polar residues) spans 495-504 (VYTNTNSNDY). Composition is skewed to low complexity over residues 510-520 (TTSGSSTSGGS), 528-546 (NVSASVSYSSVGSQTSQES), and 616-631 (SNPPAASGAGSVGANP). Polar residues-rich tracts occupy residues 632–642 (TASVRQRRNGS) and 797–824 (TPRSSQHLGPTAVLSVTPSSHLTSSTPG). Residue Thr-813 is modified to Phosphothreonine. Position 825 is a phosphoserine (Ser-825). An F-box domain is found at 889–935 (RDFISLLPRELALFVLSYLEPKDLLRAAQTCRSWRFLCDDNLLWKEK). WD repeat units follow at residues 992 to 1030 (GHDDHVITCLQFSGNRIVSGSDDNTLKVWSAVNGKCLRT), 1033 to 1070 (GHTGGVWSSQMSGNIIISGSTDRTLKVWDMDSGACVHT), 1073 to 1110 (GHTSTVRCMHLHGSKVVSGSRDATLRVWDIEQGSCLHV), 1113 to 1150 (GHLAAVRCVQYDGKLIVSGAYDYMVKIWHPERQECLHT), 1153 to 1190 (GHTNRVYSLQFDGLHVVSGSLDTSIRVWDVETGNCKHT), 1193 to 1232 (GHQSLTSGMELRQNILVSGNADSTVKVWDITTGQCLQTLS), and 1236 to 1273 (KHHSAVTCLQFNSRFVVTSSDDGTVKLWDVKTGDFIRN).

As to quaternary structure, part of a SCF E3 ubiquitin-protein ligase complex. Interacts with Myc and puf. Interacts with CycE. In terms of tissue distribution, expressed in follicle cell epithelium and imaginal disks, particularly in the morphogenetic furrow.

The protein localises to the nucleus. It functions in the pathway protein modification; protein ubiquitination. Substrate recognition component of a SCF (SKP1-CUL1-F-box protein) E3 ubiquitin-protein ligase complex which mediates the ubiquitination and subsequent proteasomal degradation of target proteins. Probably recognizes and binds to phosphorylated target proteins. In the wing and eye, negatively regulates cell growth and proliferation by mediating the degradation of Myc and cyclin E, respectively. Required for endocycles, but not mitosis in follicle cell epithelium. This is F-box/WD repeat-containing protein 7 from Drosophila melanogaster (Fruit fly).